The sequence spans 124 residues: Prefoldin subunit beta (124 aa).

Belongs to the prefoldin subunit beta family. As to quaternary structure, heterohexamer of two alpha and four beta subunits.

The protein localises to the cytoplasm. In terms of biological role, molecular chaperone capable of stabilizing a range of proteins. Seems to fulfill an ATP-independent, HSP70-like function in archaeal de novo protein folding. This chain is Prefoldin subunit beta (pfdB), found in Thermoplasma volcanium (strain ATCC 51530 / DSM 4299 / JCM 9571 / NBRC 15438 / GSS1).